Here is a 457-residue protein sequence, read N- to C-terminus: BAG family molecular chaperone regulator 4 (457 aa).

Residues 1-101 (MSALRRSGYG…QPPYPSYNSN (101 aa)) form a disordered region. At Ser-7 the chain carries Phosphoserine. Positions 8–20 (GYGPSDGPSYGRY) are enriched in low complexity. Pro residues predominate over residues 30 to 47 (VHPPPPLYPLRPEPPQPP). Arg-40, Arg-53, and Arg-108 each carry omega-N-methylarginine. 3 disordered regions span residues 113–136 (YPST…NGAY), 166–333 (STEV…DDSD), and 347–377 (LYGN…ESTP). Residues 166–182 (STEVPSTYRSSGNSPTP) are compositionally biased toward polar residues. Residue Arg-185 is modified to Omega-N-methylarginine. Composition is skewed to low complexity over residues 274–284 (STSPWPSSGSP) and 294–308 (QPKD…SDQS). Composition is skewed to polar residues over residues 320 to 333 (QYES…DDSD) and 347 to 365 (LYGN…SSSL). Residues 379–456 (SIKKIIHVLE…AILEKLEKKG (78 aa)) enclose the BAG domain.

As to quaternary structure, binds to the ATPase domain of HSP/HSC70 chaperones. Binds to the death domain of TNFRSF1A in the absence of TNF and thereby prevents binding of adapter molecules such as TRADD or TRAF2. Binds to the death domain of TNFRSF12. Interacts with PRKN. As to expression, ubiquitous.

The protein resides in the cytoplasm. Functionally, inhibits the chaperone activity of HSP70/HSC70 by promoting substrate release. Prevents constitutive TNFRSF1A signaling. Negative regulator of PRKN translocation to damaged mitochondria. The sequence is that of BAG family molecular chaperone regulator 4 (BAG4) from Homo sapiens (Human).